The chain runs to 154 residues: Myoglobin (154 aa).

The Globin domain maps to 2-148 (GLSDGEWQLV…FRKDIAAKYK (147 aa)). Phosphoserine is present on Ser4. Residue His65 participates in nitrite binding. His65 provides a ligand contact to O2. Residue Thr68 is modified to Phosphothreonine. His94 serves as a coordination point for heme b.

It belongs to the globin family. Monomeric.

Its subcellular location is the cytoplasm. It is found in the sarcoplasm. It carries out the reaction Fe(III)-heme b-[protein] + nitric oxide + H2O = Fe(II)-heme b-[protein] + nitrite + 2 H(+). It catalyses the reaction H2O2 + AH2 = A + 2 H2O. Its function is as follows. Monomeric heme protein which primary function is to store oxygen and facilitate its diffusion within muscle tissues. Reversibly binds oxygen through a pentacoordinated heme iron and enables its timely and efficient release as needed during periods of heightened demand. Depending on the oxidative conditions of tissues and cells, and in addition to its ability to bind oxygen, it also has a nitrite reductase activity whereby it regulates the production of bioactive nitric oxide. Under stress conditions, like hypoxia and anoxia, it also protects cells against reactive oxygen species thanks to its pseudoperoxidase activity. In Globicephala melas (Long-finned pilot whale), this protein is Myoglobin (MB).